The chain runs to 419 residues: Histidine--tRNA ligase (419 aa).

Belongs to the class-II aminoacyl-tRNA synthetase family. Homodimer.

It is found in the cytoplasm. The catalysed reaction is tRNA(His) + L-histidine + ATP = L-histidyl-tRNA(His) + AMP + diphosphate + H(+). In Thermosipho melanesiensis (strain DSM 12029 / CIP 104789 / BI429), this protein is Histidine--tRNA ligase.